Here is an 86-residue protein sequence, read N- to C-terminus: Co-chaperonin GroES (86 aa).

The protein belongs to the GroES chaperonin family. As to quaternary structure, heptamer of 7 subunits arranged in a ring. Interacts with the chaperonin GroEL.

It localises to the cytoplasm. Its function is as follows. Together with the chaperonin GroEL, plays an essential role in assisting protein folding. The GroEL-GroES system forms a nano-cage that allows encapsulation of the non-native substrate proteins and provides a physical environment optimized to promote and accelerate protein folding. GroES binds to the apical surface of the GroEL ring, thereby capping the opening of the GroEL channel. This is Co-chaperonin GroES from Sulfurovum sp. (strain NBC37-1).